The sequence spans 457 residues: Oxygen-independent coproporphyrinogen III oxidase (457 aa).

Positions 47–280 constitute a Radical SAM core domain; sequence RYPERPLSLY…QETIVSLTQA (234 aa). Y56 is a binding site for S-adenosyl-L-methionine. The [4Fe-4S] cluster site is built by C62 and C66. S-adenosyl-L-methionine is bound at residue F68. Residue C69 participates in [4Fe-4S] cluster binding. Residues G112, 113–114, E145, Q172, R184, D209, A243, and I329 contribute to the S-adenosyl-L-methionine site; that span reads GT.

This sequence belongs to the anaerobic coproporphyrinogen-III oxidase family. As to quaternary structure, monomer. The cofactor is [4Fe-4S] cluster.

The protein localises to the cytoplasm. The catalysed reaction is coproporphyrinogen III + 2 S-adenosyl-L-methionine = protoporphyrinogen IX + 2 5'-deoxyadenosine + 2 L-methionine + 2 CO2. It functions in the pathway porphyrin-containing compound metabolism; protoporphyrin-IX biosynthesis; protoporphyrinogen-IX from coproporphyrinogen-III (AdoMet route): step 1/1. Functionally, involved in the heme biosynthesis. Catalyzes the anaerobic oxidative decarboxylation of propionate groups of rings A and B of coproporphyrinogen III to yield the vinyl groups in protoporphyrinogen IX. This Salmonella typhi protein is Oxygen-independent coproporphyrinogen III oxidase (hemN).